A 48-amino-acid chain; its full sequence is Large ribosomal subunit protein eL40 (48 aa).

The protein belongs to the eukaryotic ribosomal protein eL40 family.

The sequence is that of Large ribosomal subunit protein eL40 from Methanosphaerula palustris (strain ATCC BAA-1556 / DSM 19958 / E1-9c).